A 248-amino-acid polypeptide reads, in one-letter code: Fasciclin-like arabinogalactan protein 19 (248 aa).

A signal peptide spans 1–29 (MAKISSASCFRAIFLGALIILCLPHPSTG). Residues 35–166 (LERAIAILRV…IAVHGLADLL (132 aa)) enclose the FAS1 domain. Asn114 and Asn136 each carry an N-linked (GlcNAc...) asparagine glycan. Positions 213-226 (SPSVEEVSPSPSWG) are enriched in low complexity. The tract at residues 213-248 (SPSVEEVSPSPSWGEGEEDFIVGDEGGPLDGRNNGF) is disordered.

This sequence belongs to the fasciclin-like AGP family.

Its subcellular location is the secreted. May be a cell surface adhesion protein. This Arabidopsis thaliana (Mouse-ear cress) protein is Fasciclin-like arabinogalactan protein 19 (FLA19).